A 1450-amino-acid polypeptide reads, in one-letter code: Protein TIC 214 (1450 aa).

6 helical membrane-spanning segments follow: residues 29–49, 61–81, 86–106, 132–152, 166–186, and 213–233; these read FGLYYGFLTTLPISFSHIVVI, VMAFCGLITGQLCMIGTIYYT, LFIKPHLILLLSIIYSFFYWQ, FFDSFVFQILNPILLPTPIFF, LNFFLSFFIGSLIGNFLFFNA, and IIPIVFCICLIPIAKYSHIPF.

The protein belongs to the TIC214 family. Part of the Tic complex.

Its subcellular location is the plastid. The protein localises to the chloroplast inner membrane. Functionally, involved in protein precursor import into chloroplasts. May be part of an intermediate translocation complex acting as a protein-conducting channel at the inner envelope. This chain is Protein TIC 214, found in Chaetosphaeridium globosum (Charophycean green alga).